The chain runs to 210 residues: Uracil phosphoribosyltransferase (210 aa).

Residues Arg-77, Arg-102, and 129–137 (DPMLATGAS) each bind 5-phospho-alpha-D-ribose 1-diphosphate. Residues Ile-195 and 200–202 (GDA) each bind uracil. A 5-phospho-alpha-D-ribose 1-diphosphate-binding site is contributed by Asp-201.

It belongs to the UPRTase family. Requires Mg(2+) as cofactor.

The catalysed reaction is UMP + diphosphate = 5-phospho-alpha-D-ribose 1-diphosphate + uracil. Its pathway is pyrimidine metabolism; UMP biosynthesis via salvage pathway; UMP from uracil: step 1/1. Allosterically activated by GTP. In terms of biological role, catalyzes the conversion of uracil and 5-phospho-alpha-D-ribose 1-diphosphate (PRPP) to UMP and diphosphate. This Mycoplasmoides gallisepticum (strain R(low / passage 15 / clone 2)) (Mycoplasma gallisepticum) protein is Uracil phosphoribosyltransferase.